The chain runs to 632 residues: Lipoma-preferred partner homolog (632 aa).

2 disordered regions span residues 1–118 (MSHP…RSSL) and 135–249 (SSPY…RSYN). Over residues 26–40 (THSFGTPSISVSTQQ) the composition is skewed to polar residues. Positions 41–53 (PPKKFAPVVAPKP) are enriched in low complexity. The residue at position 109 (Lys109) is an N6-acetyllysine. Phosphoserine occurs at positions 117 and 152. Residues 144–160 (PGSSSSIASPPVSTPVT) show a composition bias toward low complexity. Composition is skewed to polar residues over residues 172 to 182 (PLTATKKSATK) and 206 to 239 (SYST…SSGQ). Tyr241 carries the phosphotyrosine modification. Residue Arg246 is modified to Omega-N-methylarginine. Residue Lys324 forms a Glycyl lysine isopeptide (Lys-Gly) (interchain with G-Cter in SUMO1) linkage. 3 LIM zinc-binding domains span residues 434 to 493 (GRCA…INTL), 494 to 554 (EQCS…KFAP), and 555 to 623 (RCSV…RIRV).

Belongs to the zyxin/ajuba family. As to quaternary structure, interacts with PDZ domains of SCRIB, with VASP and with ACTN1/alpha-actinin.

It localises to the nucleus. The protein resides in the cytoplasm. The protein localises to the cell junction. May play a structural role at sites of cell adhesion in maintaining cell shape and motility. In addition to these structural functions, it may also be implicated in signaling events and activation of gene transcription. May be involved in signal transduction from cell adhesion sites to the nucleus allowing successful integration of signals arising from soluble factors and cell-cell adhesion. Also suggested to serve as a scaffold protein upon which distinct protein complexes are assembled in the cytoplasm and in the nucleus. The polypeptide is Lipoma-preferred partner homolog (Lpp) (Rattus norvegicus (Rat)).